The following is a 174-amino-acid chain: Nucleoside-triphosphatase THEP1 (174 aa).

ATP-binding positions include 8 to 15 and 99 to 106; these read GIPGIGKS and LIVIDEVG.

This sequence belongs to the THEP1 NTPase family.

The catalysed reaction is a ribonucleoside 5'-triphosphate + H2O = a ribonucleoside 5'-diphosphate + phosphate + H(+). In terms of biological role, has nucleotide phosphatase activity towards ATP, GTP, CTP, TTP and UTP. May hydrolyze nucleoside diphosphates with lower efficiency. In Methanosarcina barkeri (strain Fusaro / DSM 804), this protein is Nucleoside-triphosphatase THEP1.